The following is a 375-amino-acid chain: Ferredoxin--NADP reductase, root-type isozyme, chloroplastic (375 aa).

A chloroplast-targeting transit peptide spans 1-60; the sequence is MAHSALSQVSVAVPLQTDSSFRRSTFKATSITFSDRSSWISMPPIDLKAAPSRNQHIVCM. The FAD-binding FR-type domain maps to 91–219; it reads KEPYTATIVS…TGPSGKIMLL (129 aa). FAD-binding positions include 151–154, 172–174, Tyr-178, 193–195, and Thr-235; these read RLYL, CVR, and VCS. Position 174 (Arg-174) interacts with NADP(+). Residues Thr-235, 266–267, 296–297, Lys-306, 334–335, and Glu-373 each bind NADP(+); these read VA, SR, and GL.

It belongs to the ferredoxin--NADP reductase type 1 family. The cofactor is FAD.

It localises to the plastid. The protein localises to the chloroplast. It carries out the reaction 2 reduced [2Fe-2S]-[ferredoxin] + NADP(+) + H(+) = 2 oxidized [2Fe-2S]-[ferredoxin] + NADPH. The protein operates within energy metabolism; photosynthesis. Its function is as follows. May play a key role in regulating the relative amounts of cyclic and non-cyclic electron flow to meet the demands of the plant for ATP and reducing power. Is involved in nitrate assimilation. This chain is Ferredoxin--NADP reductase, root-type isozyme, chloroplastic, found in Nicotiana tabacum (Common tobacco).